The following is a 385-amino-acid chain: Chorismate synthase (385 aa).

The interval 43–63 is disordered; sequence PDLDRRRPGTSRHVTQRNEPD. Residues Arg48 and Arg54 each coordinate NADP(+). FMN contacts are provided by residues 125-127, 238-239, Gly278, 293-297, and Arg319; these read RSS, NA, and KPTSS. The span at 363 to 372 shows a compositional bias: low complexity; it reads AQAPRTETAP. The interval 363-385 is disordered; the sequence is AQAPRTETAPATPPLDAGDDIEA.

Belongs to the chorismate synthase family. Homotetramer. Requires FMNH2 as cofactor.

The enzyme catalyses 5-O-(1-carboxyvinyl)-3-phosphoshikimate = chorismate + phosphate. It participates in metabolic intermediate biosynthesis; chorismate biosynthesis; chorismate from D-erythrose 4-phosphate and phosphoenolpyruvate: step 7/7. Functionally, catalyzes the anti-1,4-elimination of the C-3 phosphate and the C-6 proR hydrogen from 5-enolpyruvylshikimate-3-phosphate (EPSP) to yield chorismate, which is the branch point compound that serves as the starting substrate for the three terminal pathways of aromatic amino acid biosynthesis. This reaction introduces a second double bond into the aromatic ring system. This chain is Chorismate synthase, found in Leptothrix cholodnii (strain ATCC 51168 / LMG 8142 / SP-6) (Leptothrix discophora (strain SP-6)).